A 114-amino-acid polypeptide reads, in one-letter code: Probable 4-amino-4-deoxy-L-arabinose-phosphoundecaprenol flippase subunit ArnE (114 aa).

3 helical membrane passes run 38 to 58 (LTLR…LLWL), 64 to 84 (LPLS…TLAA), and 94 to 114 (LRHW…SWHL). The 70-residue stretch at 43–112 (LAIAVVSLGL…IMFGILLMSW (70 aa)) folds into the EamA domain.

It belongs to the ArnE family. In terms of assembly, heterodimer of ArnE and ArnF.

The protein localises to the cell inner membrane. It participates in bacterial outer membrane biogenesis; lipopolysaccharide biosynthesis. Translocates 4-amino-4-deoxy-L-arabinose-phosphoundecaprenol (alpha-L-Ara4N-phosphoundecaprenol) from the cytoplasmic to the periplasmic side of the inner membrane. This is Probable 4-amino-4-deoxy-L-arabinose-phosphoundecaprenol flippase subunit ArnE from Yersinia pestis bv. Antiqua (strain Antiqua).